The primary structure comprises 211 residues: Protein G12 (211 aa).

The signal sequence occupies residues 1–19 (MKIAAFVVACLVATSAVSC).

The chain is Protein G12 from Anopheles gambiae (African malaria mosquito).